We begin with the raw amino-acid sequence, 865 residues long: LINE-1 type transposase domain-containing protein 1 (865 aa).

Serine 2 is subject to N-acetylserine. At serine 2 the chain carries Phosphoserine. Position 149 is a phosphothreonine (threonine 149). Serine 154 bears the Phosphoserine mark. The tract at residues 370-508 (EMKNLETQEE…EKKASRRQKE (139 aa)) is disordered. Acidic residues-rich tracts occupy residues 376–440 (TQEE…EQTS) and 472–483 (SVEDSESEEEEE). Phosphoserine is present on residues serine 472, serine 476, and serine 478. A compositionally biased stretch (basic and acidic residues) spans 498-508 (TEKKASRRQKE). Serine 518, serine 561, and serine 573 each carry phosphoserine. Over residues 590-608 (EEKKHRTLHTEELTSKEAD) the composition is skewed to basic and acidic residues. The segment at 590–612 (EEKKHRTLHTEELTSKEADLTEE) is disordered. Residues serine 640, serine 648, and serine 665 each carry the phosphoserine modification. A coiled-coil region spans residues 642 to 684 (VLEIENSVDDLSSRMDILEERIDSLEDQIEEFSKDTMQMTKQI).

The protein belongs to the transposase 22 family.

This is LINE-1 type transposase domain-containing protein 1 (L1TD1) from Homo sapiens (Human).